Reading from the N-terminus, the 496-residue chain is N-acetylmuramoyl-L-alanine amidase LytC (496 aa).

The first 24 residues, 1–24 (MRSYIKVLTMCFLGLILFVPTALA), serve as a signal peptide directing secretion. Repeat copies occupy residues 30–128 (RVGG…ISIK), 129–222 (RIAG…PSPT), and 223–318 (RISG…NPVV). Residues 30–318 (RVGGSNRYGT…VANQLKNPVV (289 aa)) are 3 X tandem repeats. Residues 322-490 (IFIDPGHGDQ…DKAAQAIHDG (169 aa)) form the MurNAc-LAA domain.

This sequence belongs to the N-acetylmuramoyl-L-alanine amidase 3 family.

It is found in the secreted. It localises to the cell wall. It catalyses the reaction Hydrolyzes the link between N-acetylmuramoyl residues and L-amino acid residues in certain cell-wall glycopeptides.. Its function is as follows. Autolysins are cell wall hydrolases involved in some important biological processes such as cell separation, cell-wall turnover, competence for genetic transformation, formation of the flagella - in particular of its basal body - and sporulation. Has a high affinity for teichoic acid-endowed peptidoglycan. LytC is required for efficient swarming motility but not at the level of cell separation or flagellum biosynthesis. Rather, LytC appears to be important for proper flagellar function. This is N-acetylmuramoyl-L-alanine amidase LytC (lytC) from Bacillus subtilis (strain 168).